The chain runs to 129 residues: Small ribosomal subunit protein uS8my (129 aa).

The protein belongs to the universal ribosomal protein uS8 family. Component of the mitochondrial ribosome small subunit.

It is found in the mitochondrion. This is Small ribosomal subunit protein uS8my (RPS15AE) from Arabidopsis thaliana (Mouse-ear cress).